A 395-amino-acid chain; its full sequence is E3 ubiquitin-protein ligase RNFT1 (395 aa).

2 disordered regions span residues 1–58 (MQAS…SSRN) and 78–97 (YSHSEARPPDDFATESGEHG). 6 helical membrane passes run 118-138 (ILILGIKLVMQHITGISLGIG), 165-185 (CAWLLVFLAGSSVLLYYTFHS), 193-213 (IFLNPTLEQLSFWEVLWIVGI), 216-236 (FILKFFFMGLKCLILLVPSFI), 258-278 (IFVPIPVWFRYLISYGEFGNV), and 283-303 (LGILLALLYLILKLLDFFGHL). Residues 328–379 (CSDMDGICTICQAEFQKPVLLFCQHIFCEECITLWFNREKTCPLCRTVISEC) are required for ubiquitin ligase activity and for protection against ER stress-induced cell death. The segment at 335-373 (CTICQAEFQKPVLLFCQHIFCEECITLWFNREKTCPLCR) adopts an RING-type zinc-finger fold.

In terms of tissue distribution, predominantly expressed in testis.

Its subcellular location is the early endosome membrane. The enzyme catalyses S-ubiquitinyl-[E2 ubiquitin-conjugating enzyme]-L-cysteine + [acceptor protein]-L-lysine = [E2 ubiquitin-conjugating enzyme]-L-cysteine + N(6)-ubiquitinyl-[acceptor protein]-L-lysine.. It participates in protein modification; protein ubiquitination. Functionally, E3 ubiquitin-protein ligase that acts in the endoplasmic reticulum (ER)-associated degradation (ERAD) pathway, which targets misfolded proteins that accumulate in the endoplasmic reticulum (ER) for ubiquitination and subsequent proteasome-mediated degradation. Protects cells from ER stress-induced apoptosis. This Mus musculus (Mouse) protein is E3 ubiquitin-protein ligase RNFT1 (Rnft1).